Consider the following 254-residue polypeptide: Acetyl-coenzyme A carboxylase carboxyl transferase subunit beta (254 aa).

Positions 1 to 254 constitute a CoA carboxyltransferase N-terminal domain; that stretch reads MWLRCPHCHQ…LLKTGSVANE (254 aa). Zn(2+) is bound by residues cysteine 5, cysteine 8, cysteine 23, and cysteine 26. A C4-type zinc finger spans residues 5–26; sequence CPHCHQLLFAKQLTQYAVCPNC.

The protein belongs to the AccD/PCCB family. Acetyl-CoA carboxylase is a heterohexamer composed of biotin carboxyl carrier protein (AccB), biotin carboxylase (AccC) and two subunits each of ACCase subunit alpha (AccA) and ACCase subunit beta (AccD). The cofactor is Zn(2+).

The protein resides in the cytoplasm. The enzyme catalyses N(6)-carboxybiotinyl-L-lysyl-[protein] + acetyl-CoA = N(6)-biotinyl-L-lysyl-[protein] + malonyl-CoA. Its pathway is lipid metabolism; malonyl-CoA biosynthesis; malonyl-CoA from acetyl-CoA: step 1/1. In terms of biological role, component of the acetyl coenzyme A carboxylase (ACC) complex. Biotin carboxylase (BC) catalyzes the carboxylation of biotin on its carrier protein (BCCP) and then the CO(2) group is transferred by the transcarboxylase to acetyl-CoA to form malonyl-CoA. In Limosilactobacillus reuteri (strain DSM 20016) (Lactobacillus reuteri), this protein is Acetyl-coenzyme A carboxylase carboxyl transferase subunit beta.